A 247-amino-acid chain; its full sequence is Retbindin (247 aa).

The N-terminal stretch at methionine 1–serine 31 is a signal peptide. Cystine bridges form between cysteine 99-cysteine 169, cysteine 106-cysteine 146, cysteine 139-cysteine 183, and cysteine 152-cysteine 165.

This sequence belongs to the folate receptor family. In terms of processing, not N-glycosylated. In terms of tissue distribution, expressed in the peripheral retina where it localizes to the inter-photoreceptor matrix (at protein level). May be produced by rod photoreceptors (at protein level).

Its subcellular location is the secreted. The protein localises to the extracellular space. It is found in the extracellular matrix. It localises to the interphotoreceptor matrix. The protein resides in the cell membrane. Riboflavin-binding protein which might have a role in retinal flavin transport. The polypeptide is Retbindin (Rtbdn) (Mus musculus (Mouse)).